A 204-amino-acid polypeptide reads, in one-letter code: Large ribosomal subunit protein eL15 (204 aa).

It belongs to the eukaryotic ribosomal protein eL15 family. In terms of assembly, component of the large ribosomal subunit.

The protein localises to the cytoplasm. Functionally, component of the large ribosomal subunit. The ribosome is a large ribonucleoprotein complex responsible for the synthesis of proteins in the cell. The polypeptide is Large ribosomal subunit protein eL15 (rpl15) (Siniperca knerii (Big-eye mandarin fish)).